The following is a 238-amino-acid chain: Orotidine 5'-phosphate decarboxylase (238 aa).

Residues Asp-10, Lys-32, Asp-59 to Thr-68, Thr-122, Arg-184, Gln-193, Gly-213, and Arg-214 contribute to the substrate site. Lys-61 functions as the Proton donor in the catalytic mechanism.

The protein belongs to the OMP decarboxylase family. Type 1 subfamily. In terms of assembly, homodimer.

The enzyme catalyses orotidine 5'-phosphate + H(+) = UMP + CO2. It functions in the pathway pyrimidine metabolism; UMP biosynthesis via de novo pathway; UMP from orotate: step 2/2. Its function is as follows. Catalyzes the decarboxylation of orotidine 5'-monophosphate (OMP) to uridine 5'-monophosphate (UMP). The polypeptide is Orotidine 5'-phosphate decarboxylase (Bacillus cereus (strain Q1)).